Consider the following 365-residue polypeptide: Eukaryotic translation initiation factor 3 subunit H (365 aa).

One can recognise an MPN domain in the interval 15–166 (ILLDSLVVMK…LRAWRLSTAA (152 aa)).

It belongs to the eIF-3 subunit H family. In terms of assembly, component of the eukaryotic translation initiation factor 3 (eIF-3) complex.

It is found in the cytoplasm. Component of the eukaryotic translation initiation factor 3 (eIF-3) complex, which is involved in protein synthesis of a specialized repertoire of mRNAs and, together with other initiation factors, stimulates binding of mRNA and methionyl-tRNAi to the 40S ribosome. The eIF-3 complex specifically targets and initiates translation of a subset of mRNAs involved in cell proliferation. The protein is Eukaryotic translation initiation factor 3 subunit H of Caenorhabditis elegans.